We begin with the raw amino-acid sequence, 460 residues long: ESX-1 secretion-associated protein EspB (460 aa).

Disordered stretches follow at residues 92–116 (LDNDGEGTVQAESAGAVGGDSSAEL), 303–335 (PSDGSGVTPGTGMPAAPMVPPTGSPGGGLPADT), and 405–441 (LGGGGMGMPMGAAHQGQGGAKSKGSQQEDEALYTEDR).

In terms of processing, cleaved in the C-terminal region by MycP1.

The protein localises to the secreted. In Mycobacterium tuberculosis (strain CDC 1551 / Oshkosh), this protein is ESX-1 secretion-associated protein EspB.